The primary structure comprises 312 residues: Ribosomal RNA small subunit methyltransferase H (312 aa).

S-adenosyl-L-methionine is bound by residues 35 to 37 (GGH), D55, F79, D101, and Q108.

This sequence belongs to the methyltransferase superfamily. RsmH family.

Its subcellular location is the cytoplasm. It carries out the reaction cytidine(1402) in 16S rRNA + S-adenosyl-L-methionine = N(4)-methylcytidine(1402) in 16S rRNA + S-adenosyl-L-homocysteine + H(+). Functionally, specifically methylates the N4 position of cytidine in position 1402 (C1402) of 16S rRNA. The chain is Ribosomal RNA small subunit methyltransferase H from Glaesserella parasuis serovar 5 (strain SH0165) (Haemophilus parasuis).